The following is a 149-amino-acid chain: 3-dehydroquinate dehydratase (149 aa).

Residue tyrosine 22 is the Proton acceptor of the active site. 3 residues coordinate substrate: asparagine 74, histidine 80, and aspartate 87. The active-site Proton donor is histidine 100. Substrate-binding positions include 101–102 (LS) and arginine 111.

This sequence belongs to the type-II 3-dehydroquinase family. As to quaternary structure, homododecamer.

The catalysed reaction is 3-dehydroquinate = 3-dehydroshikimate + H2O. The protein operates within metabolic intermediate biosynthesis; chorismate biosynthesis; chorismate from D-erythrose 4-phosphate and phosphoenolpyruvate: step 3/7. In terms of biological role, catalyzes a trans-dehydration via an enolate intermediate. This is 3-dehydroquinate dehydratase from Vesicomyosocius okutanii subsp. Calyptogena okutanii (strain HA).